The chain runs to 396 residues: Probable sugar efflux transporter (396 aa).

Residues 1–14 (MTTNTVSRKVAWLR) lie on the Cytoplasmic side of the membrane. Residues 15-35 (VVTLAVAAFIFNTTEFVPVGL) traverse the membrane as a helical segment. Topologically, residues 36–49 (LSDIAQSFHMQTAQ) are periplasmic. The helical transmembrane segment at 50-70 (VGIMLTIYAWVVALMSLPFML) threads the bilayer. At 71–80 (MTSQVERRKL) the chain is on the cytoplasmic side. The helical transmembrane segment at 81–101 (LICLFVVFIASHVLSFLSWSF) threads the bilayer. Residue threonine 102 is a topological domain, periplasmic. A helical membrane pass occupies residues 103–123 (VLVISRIGVAFAHAIFWSITA). The Cytoplasmic segment spans residues 124–135 (SLAIRMAPAGKR). A helical transmembrane segment spans residues 136–156 (AQALSLIATGTALAMVLGLPL). Residues 157-169 (GRIVGQYFGWRMT) lie on the Periplasmic side of the membrane. Residues 170 to 190 (FFAIGIGALVTLLCLIKLLPL) traverse the membrane as a helical segment. Residues 191-208 (LPSEHSGSLKSLPLLFRR) are Cytoplasmic-facing. A helical transmembrane segment spans residues 209–229 (PALMSIYLLTVVVVTAHYTAY). The Periplasmic segment spans residues 230 to 245 (SYIEPFVQNIAGFSAN). A helical membrane pass occupies residues 246 to 266 (FATALLLLLGGAGIIGSVIFG). Topologically, residues 267–274 (KLGNQYAS) are cytoplasmic. A helical transmembrane segment spans residues 275 to 295 (ALVSTAIALLLVCLALLLPAA). Residues 296–298 (NSE) lie on the Periplasmic side of the membrane. Residues 299-319 (IHLGVLSIFWGIAMMIIGLGM) traverse the membrane as a helical segment. Over 320 to 332 (QVKVLALAPDATD) the chain is Cytoplasmic. A helical membrane pass occupies residues 333–353 (VAMALFSGIFNIGIGAGALVG). Residues 354 to 363 (NQVSLHWSMS) lie on the Periplasmic side of the membrane. The helical transmembrane segment at 364-384 (MIGYVGAVPAFAALIWSIIIF) threads the bilayer. Topologically, residues 385–396 (RRWPVTLEEQTQ) are cytoplasmic.

It belongs to the major facilitator superfamily. SotB (TC 2.A.1.2) family.

Its subcellular location is the cell inner membrane. In terms of biological role, involved in the efflux of sugars. The physiological role may be the reduction of the intracellular concentration of toxic sugars or sugar metabolites. In Shigella flexneri, this protein is Probable sugar efflux transporter.